The chain runs to 189 residues: Phosphoheptose isomerase (189 aa).

The SIS domain maps to V34 to G189. A substrate-binding site is contributed by N49–G51. 2 residues coordinate Zn(2+): H58 and E62. Substrate is bound by residues E62, N91 to D92, S117 to S119, S122, and Q169. Positions 169 and 177 each coordinate Zn(2+).

It belongs to the SIS family. GmhA subfamily. As to quaternary structure, homotetramer. Zn(2+) serves as cofactor.

The protein resides in the cytoplasm. It catalyses the reaction 2 D-sedoheptulose 7-phosphate = D-glycero-alpha-D-manno-heptose 7-phosphate + D-glycero-beta-D-manno-heptose 7-phosphate. It participates in carbohydrate biosynthesis; D-glycero-D-manno-heptose 7-phosphate biosynthesis; D-glycero-alpha-D-manno-heptose 7-phosphate and D-glycero-beta-D-manno-heptose 7-phosphate from sedoheptulose 7-phosphate: step 1/1. Catalyzes the isomerization of sedoheptulose 7-phosphate in D-glycero-D-manno-heptose 7-phosphate. The polypeptide is Phosphoheptose isomerase (Campylobacter concisus (strain 13826)).